Here is an 867-residue protein sequence, read N- to C-terminus: Cation/H(+) antiporter 23, chloroplastic (867 aa).

12 helical membrane-spanning segments follow: residues 43–63 (SGST…VANL), 75–95 (LYLP…PSVL), 112–132 (MVLE…LGLG), 146–166 (VIIA…LYYL), 175–195 (IISG…PDLA), 212–232 (AMCA…FGFA), 242–262 (KMMP…IFVI), 283–303 (HVWF…ACGV), 336–356 (GILM…GFML), 362–382 (FMMV…TVIT), 393–413 (AFAI…VLNA), and 427–447 (HMTI…AFAY). Residues 848–867 (SMYEDEDEDDEEDHQYGIHR) form a disordered region. Positions 851 to 860 (EDEDEDDEED) are enriched in acidic residues.

This sequence belongs to the monovalent cation:proton antiporter 2 (CPA2) transporter (TC 2.A.37) family. CHX (TC 2.A.37.4) subfamily. In terms of tissue distribution, specifically expressed in flower buds and pollen. Expressed in leaves, roots and stems.

It is found in the plastid. The protein resides in the chloroplast membrane. Its subcellular location is the endoplasmic reticulum membrane. In terms of biological role, operates as a K(+)/H(+) antiporter or Na(+)/H(+) antiporter of the chloroplast envelope that functions in pH homeostasis and chloroplast development. Monovalent cation transporter with a preference for Cs(+), K(+) and Rb(+) relative to Na(+) or Li(+). Required for pollen tube guidance, but not for normal pollen development. May also be involved in the development or function of the female gametophyte. In Arabidopsis thaliana (Mouse-ear cress), this protein is Cation/H(+) antiporter 23, chloroplastic (CHX23).